We begin with the raw amino-acid sequence, 200 residues long: Large ribosomal subunit protein uL18 (200 aa).

It belongs to the universal ribosomal protein uL18 family. As to quaternary structure, part of the 50S ribosomal subunit. Contacts the 5S and 23S rRNAs.

In terms of biological role, this is one of the proteins that bind and probably mediate the attachment of the 5S RNA into the large ribosomal subunit, where it forms part of the central protuberance. The chain is Large ribosomal subunit protein uL18 from Thermococcus sibiricus (strain DSM 12597 / MM 739).